We begin with the raw amino-acid sequence, 1268 residues long: SR-related and CTD-associated factor 8 (1268 aa).

The region spanning 1–139 (MEAVKTFNSE…PLLDMAAGIP (139 aa)) is the CID domain. Threonine 6 is subject to Phosphothreonine. Residue lysine 18 forms a Glycyl lysine isopeptide (Lys-Gly) (interchain with G-Cter in SUMO1) linkage. The span at 270–283 (GEDSEHSEESKKEM) shows a compositional bias: basic and acidic residues. Disordered stretches follow at residues 270–290 (GEDSEHSEESKKEMPTPQLSH), 322–355 (QQQPQKVTPQDSQEGTFGSEHSASPSQGSSQQHF), and 385–469 (EIFE…PVRS). Serine 273 is subject to Phosphoserine. A compositionally biased stretch (polar residues) spans 327–354 (KVTPQDSQEGTFGSEHSASPSQGSSQQH). Positions 394 to 443 (VAVRSRSRTHSRSRSRSPRKRRSRSRSGSRKRKHRKRSRSHSREKKRKAS) are enriched in basic residues. The span at 447–461 (SSERRAREREKERQK) shows a compositional bias: basic and acidic residues. The RRM domain maps to 477 to 551 (TTLWVGQVDK…KVIKIAWALN (75 aa)). Serine 617 bears the Phosphoserine mark. The disordered stretch occupies residues 776–807 (QIPSGENTRPVIPSDIPSSAAMLAQPPGASST). An asymmetric dimethylarginine mark is found at arginine 915, arginine 925, and arginine 936. Disordered regions lie at residues 984 to 1012 (PGRPSIDNVPNPDKRIPLGNDNIQQEGDR) and 1040 to 1065 (RLDPREGPGRPPLDARDHFGRPPVDM). Arginine 1071 is modified (asymmetric dimethylarginine). A disordered region spans residues 1199–1268 (ATSQRKGDNV…VVESTETEGT (70 aa)). Residues 1249-1262 (GTVAGVESEAVVES) are compositionally biased toward low complexity.

Interacts with POLR2A; via C-terminal heptapeptide repeat domain (CTD) phosphorylated at 'Ser-2' and 'Ser-5'. Identified in a complex with CDC5L and other spliceosomal proteins.

It is found in the nucleus. The protein localises to the nucleus matrix. Anti-terminator protein required to prevent early mRNA termination during transcription. Together with SCAF4, acts by suppressing the use of early, alternative poly(A) sites, thereby preventing the accumulation of non-functional truncated proteins. Mechanistically, associates with the phosphorylated C-terminal heptapeptide repeat domain (CTD) of the largest RNA polymerase II subunit (POLR2A), and subsequently binds nascent RNA upstream of early polyadenylation sites to prevent premature mRNA transcript cleavage and polyadenylation. Independently of SCAF4, also acts as a positive regulator of transcript elongation. The protein is SR-related and CTD-associated factor 8 of Mus musculus (Mouse).